A 207-amino-acid polypeptide reads, in one-letter code: Putative 3-methyladenine DNA glycosylase (207 aa).

This sequence belongs to the DNA glycosylase MPG family.

This is Putative 3-methyladenine DNA glycosylase from Burkholderia orbicola (strain MC0-3).